The following is a 534-amino-acid chain: Zinc finger protein 671 (534 aa).

Residues 49-120 (VVFEDVFVYF…DQVDMTSATE (72 aa)) enclose the KRAB domain. Residues 192–214 (YLCGACGKQFWFSTDFDQHQNQP) form a C2H2-type 1; degenerate zinc finger. 9 consecutive C2H2-type zinc fingers follow at residues 285 to 307 (HRCGECGKAFTRKDTLARHQRIH), 313 to 335 (YECNECGKFFSQSYDLFKHQTVH), 341 to 363 (YECSECGKFFRQISGLIEHRRVH), 369 to 391 (YQCGKCGKFFSSKSNLIRHQEVH), 397 to 419 (YVCSECGKEFSRKHTLVLHQRTH), 425 to 447 (YECSECGKAFSQSSHLNVHWRIH), 451 to 473 (YECSRCGKAFSCISKLIQHQKVH), 479 to 501 (YECSKCGKAFTQRPNLIRHWKVH), and 507 to 529 (YVCSECGREFIRKQTLVLHQRVH).

This sequence belongs to the krueppel C2H2-type zinc-finger protein family.

It is found in the nucleus. May be involved in transcriptional regulation. The polypeptide is Zinc finger protein 671 (ZNF671) (Homo sapiens (Human)).